The chain runs to 297 residues: Protoheme IX farnesyltransferase (297 aa).

8 helical membrane passes run 15–35 (VVAL…PAPY), 39–59 (GLLV…AAVF), 91–111 (VWGV…VNII), 112–132 (TVVL…LYLK), 139–159 (IVIG…AVSG), 166–186 (ACLL…ALAI), 220–240 (LLLV…YLVI), and 265–285 (AWST…ALLF).

This sequence belongs to the UbiA prenyltransferase family. Protoheme IX farnesyltransferase subfamily.

It localises to the cell inner membrane. It catalyses the reaction heme b + (2E,6E)-farnesyl diphosphate + H2O = Fe(II)-heme o + diphosphate. It functions in the pathway porphyrin-containing compound metabolism; heme O biosynthesis; heme O from protoheme: step 1/1. In terms of biological role, converts heme B (protoheme IX) to heme O by substitution of the vinyl group on carbon 2 of heme B porphyrin ring with a hydroxyethyl farnesyl side group. The chain is Protoheme IX farnesyltransferase from Vesicomyosocius okutanii subsp. Calyptogena okutanii (strain HA).